A 360-amino-acid chain; its full sequence is Magnesium-protoporphyrin IX monomethyl ester [oxidative] cyclase (360 aa).

Residues M1–D21 form a disordered region.

Belongs to the AcsF family. Requires Fe cation as cofactor.

The enzyme catalyses Mg-protoporphyrin IX 13-monomethyl ester + 3 NADPH + 3 O2 + 2 H(+) = 3,8-divinyl protochlorophyllide a + 3 NADP(+) + 5 H2O. The protein operates within porphyrin-containing compound metabolism; chlorophyll biosynthesis (light-independent). Catalyzes the formation of the isocyclic ring in chlorophyll biosynthesis. Mediates the cyclase reaction, which results in the formation of divinylprotochlorophyllide (Pchlide) characteristic of all chlorophylls from magnesium-protoporphyrin IX 13-monomethyl ester (MgPMME). The protein is Magnesium-protoporphyrin IX monomethyl ester [oxidative] cyclase of Synechococcus sp. (strain CC9311).